The chain runs to 305 residues: N-acetylneuraminate lyase (305 aa).

The aceneuramate site is built by threonine 51 and threonine 52. Catalysis depends on tyrosine 143, which acts as the Proton donor. Catalysis depends on lysine 173, which acts as the Schiff-base intermediate with substrate. Aceneuramate is bound by residues threonine 175, glycine 197, aspartate 199, glutamate 200, and serine 216.

Belongs to the DapA family. NanA subfamily. Homotetramer.

The protein resides in the cytoplasm. It carries out the reaction aceneuramate = aldehydo-N-acetyl-D-mannosamine + pyruvate. The protein operates within amino-sugar metabolism; N-acetylneuraminate degradation. Catalyzes the cleavage of N-acetylneuraminic acid (sialic acid) to form pyruvate and N-acetylmannosamine via a Schiff base intermediate. It prevents sialic acids from being recycled and returning to the cell surface. Involved in the N-glycolylneuraminic acid (Neu5Gc) degradation pathway. The polypeptide is N-acetylneuraminate lyase (Xenopus tropicalis (Western clawed frog)).